The sequence spans 677 residues: Beta-galactosidase (677 aa).

An N-terminal signal peptide occupies residues 1–23 (MPGFLVRILPLLLALLLLGPTRG). Residues 24–28 (LRNAT) constitute a propeptide that is removed on maturation. N-linked (GlcNAc...) asparagine glycosylation is present at Asn26. 3 residues coordinate substrate: Tyr83, Glu129, and Asn187. The Proton donor role is filled by Glu188. A disulfide bridge links Cys195 with Cys230. A glycan (N-linked (GlcNAc...) asparagine) is linked at Asn247. The active-site Nucleophile is the Glu268. Residue Tyr333 participates in substrate binding. 4 N-linked (GlcNAc...) asparagine glycosylation sites follow: Asn464, Asn498, Asn545, and Asn555. An intrachain disulfide couples Cys626 to Cys634. Residues 654–677 (SKPVEKKLMPSPPQKNKDSWLDHV) form a disordered region. Positions 668–677 (KNKDSWLDHV) are enriched in basic and acidic residues.

This sequence belongs to the glycosyl hydrolase 35 family. In terms of assembly, homodimer. May form higher multimers.

Its subcellular location is the lysosome. It carries out the reaction Hydrolysis of terminal non-reducing beta-D-galactose residues in beta-D-galactosides.. Its function is as follows. Cleaves beta-linked terminal galactosyl residues from gangliosides, glycoproteins, and glycosaminoglycans. This is Beta-galactosidase (GLB1) from Pongo abelii (Sumatran orangutan).